The primary structure comprises 129 residues: Follitropin subunit beta (129 aa).

Positions 1-20 (MKSLQFCFLFCCWKAICCNS) are cleaved as a signal peptide. Intrachain disulfides connect Cys21–Cys69, Cys35–Cys84, Cys38–Cys122, Cys46–Cys100, Cys50–Cys102, and Cys105–Cys112. Residues Asn25 and Asn42 are each glycosylated (N-linked (GlcNAc...) asparagine).

Belongs to the glycoprotein hormones subunit beta family. In terms of assembly, heterodimer. The active follitropin is a heterodimer composed of an alpha chain/CGA shared with other hormones and a unique beta chain/FSHB shown here.

The protein resides in the secreted. Functionally, together with the alpha chain CGA constitutes follitropin, the follicle-stimulating hormone, and provides its biological specificity to the hormone heterodimer. Binds FSHR, a G protein-coupled receptor, on target cells to activate downstream signaling pathways. Follitropin is involved in follicle development and spermatogenesis in reproductive organs. This chain is Follitropin subunit beta (FSHB), found in Sus scrofa (Pig).